Here is a 25-residue protein sequence, read N- to C-terminus: Caerin-1.2 (25 aa).

The residue at position 25 (Leu25) is a Leucine amide.

In terms of tissue distribution, expressed by the skin parotoid and/or rostral glands.

It localises to the secreted. Functionally, antibacterial peptide, that adopts an alpha helical conformation which can disrupt bacterial membranes. Each caerin displays a different antimicrobial specificity. This is Caerin-1.2 from Ranoidea caerulea (Green tree frog).